The sequence spans 592 residues: Aspartate--tRNA ligase (592 aa).

E171 serves as a coordination point for L-aspartate. The tract at residues 195–198 (QLFK) is aspartate. R217 serves as a coordination point for L-aspartate. ATP contacts are provided by residues 217-219 (RDE) and Q226. Position 448 (H448) interacts with L-aspartate. E482 contacts ATP. R489 serves as a coordination point for L-aspartate. Residue 534–537 (GLDR) coordinates ATP.

This sequence belongs to the class-II aminoacyl-tRNA synthetase family. Type 1 subfamily. In terms of assembly, homodimer.

Its subcellular location is the cytoplasm. It carries out the reaction tRNA(Asp) + L-aspartate + ATP = L-aspartyl-tRNA(Asp) + AMP + diphosphate. Catalyzes the attachment of L-aspartate to tRNA(Asp) in a two-step reaction: L-aspartate is first activated by ATP to form Asp-AMP and then transferred to the acceptor end of tRNA(Asp). The sequence is that of Aspartate--tRNA ligase from Vibrio vulnificus (strain YJ016).